The sequence spans 323 residues: Acetyl esterase (323 aa).

The Involved in the stabilization of the negatively charged intermediate by the formation of the oxyanion hole motif lies at 91–93 (HGG). Residues serine 165, aspartate 262, and histidine 292 contribute to the active site.

It belongs to the 'GDXG' lipolytic enzyme family. Homodimer. Interacts with MalT and MelA.

It is found in the cytoplasm. In terms of biological role, displays esterase activity towards short chain fatty esters (acyl chain length of up to 8 carbons). Able to hydrolyze triacetylglycerol (triacetin) and tributyrylglycerol (tributyrin), but not trioleylglycerol (triolein) or cholesterol oleate. Negatively regulates MalT activity by antagonizing maltotriose binding. Inhibits MelA galactosidase activity. The chain is Acetyl esterase from Salmonella schwarzengrund (strain CVM19633).